The sequence spans 467 residues: ATP synthase subunit beta 1 (467 aa).

An ATP-binding site is contributed by 150 to 157 (GGAGVGKT).

This sequence belongs to the ATPase alpha/beta chains family. As to quaternary structure, F-type ATPases have 2 components, CF(1) - the catalytic core - and CF(0) - the membrane proton channel. CF(1) has five subunits: alpha(3), beta(3), gamma(1), delta(1), epsilon(1). CF(0) has three main subunits: a(1), b(2) and c(9-12). The alpha and beta chains form an alternating ring which encloses part of the gamma chain. CF(1) is attached to CF(0) by a central stalk formed by the gamma and epsilon chains, while a peripheral stalk is formed by the delta and b chains.

It is found in the cell inner membrane. It carries out the reaction ATP + H2O + 4 H(+)(in) = ADP + phosphate + 5 H(+)(out). Produces ATP from ADP in the presence of a proton gradient across the membrane. The catalytic sites are hosted primarily by the beta subunits. The polypeptide is ATP synthase subunit beta 1 (Vibrio campbellii (strain ATCC BAA-1116)).